The sequence spans 971 residues: Piwi-like protein 2 (971 aa).

Arg45 is modified (symmetric dimethylarginine). Arg74 carries the post-translational modification Omega-N-methylarginine; by PRMT5; alternate. The residue at position 74 (Arg74) is a Symmetric dimethylarginine; by PRMT5; alternate. At Arg83 the chain carries Omega-N-methylarginine; alternate. Residues Arg83 and Arg95 each carry the symmetric dimethylarginine; alternate modification. The residue at position 95 (Arg95) is an Omega-N-methylarginine; by PRMT5; alternate. A Symmetric dimethylarginine; by PRMT5; alternate modification is found at Arg100. Arg100 carries the post-translational modification Omega-N-methylarginine; alternate. The segment at 102-124 (LSANMVRKDREEPRSSLPDPSVL) is disordered. Residues Arg144 and Arg156 each carry the symmetric dimethylarginine modification. The segment at 159–200 (SSIGRGMDKPPSAFGLTARDPPRLPQPPALSPTSLHSADPPP) is disordered. Residue Arg163 is modified to Symmetric dimethylarginine; by PRMT5. A PAZ domain is found at 387–500 (SVLDVMHAIY…LLPELSFMTG (114 aa)). Arg549 carries the post-translational modification Symmetric dimethylarginine; by PRMT5. One can recognise a Piwi domain in the interval 666–957 (MVVCIIMGTR…LAFLSGQILH (292 aa)). Active-site residues include Asp743, Glu781, Asp813, and His946.

It belongs to the argonaute family. Piwi subfamily. In terms of assembly, interacts with DDX4, MAEL, EIF3A, EIF4E, EIF4G, PRMT5 and WDR77. Associates with EIF4E- and EIF4G-containing m7G cap-binding complexes. Interacts (when methylated on arginine residues) with TDRD1 and TDRKH/TDRD2. Interacts with TDRD12. Component of the PET complex, at least composed of EXD1, PIWIL2, TDRD12 and piRNAs. Interacts with MOV10L1. Interacts with GPAT2. Interacts with Tex19.1 and, probably, Tex19.2. Interacts (via PIWI domain) with BMAL1 and CLOCK. Interacts with GSK3B. Interacts with TEX15. Requires Mg(2+) as cofactor. Arginine methylation by PRMT5 is required for the interaction with Tudor domain-containing protein TDRD1 and subsequent localization to the meiotic nuage, also named P granule. Expressed in adult testis, specifically in spermatocytes and in spermatogonia. Only detected in primordial germ cells of both sexes. Widely expressed in tumors. Also present at early stages of oocyte growth. Present in the mitotic spermatogonia. Not detected in the first stages of meiosis (preleptotene and leptotene). Detected at the late zygotene stage and increases throughout pachytene, declining from this stage onward until expression stops at the early round spermatid stage (at protein level).

Its subcellular location is the cytoplasm. Functionally, endoribonuclease that plays a central role during spermatogenesis by repressing transposable elements and preventing their mobilization, which is essential for the germline integrity. Plays an essential role in meiotic differentiation of spermatocytes, germ cell differentiation and in self-renewal of spermatogonial stem cells. Its presence in oocytes suggests that it may participate in similar functions during oogenesis in females. Acts via the piRNA metabolic process, which mediates the repression of transposable elements during meiosis by forming complexes composed of piRNAs and Piwi proteins and govern the methylation and subsequent repression of transposons. During piRNA biosynthesis, plays a key role in the piRNA amplification loop, also named ping-pong amplification cycle, by acting as a 'slicer-competent' piRNA endoribonuclease that cleaves primary piRNAs, which are then loaded onto 'slicer-incompetent' PIWIL4. PIWIL2 slicing produces a pre-miRNA intermediate, which is then processed in mature piRNAs, and as well as a 16 nucleotide by-product that is degraded. Required for PIWIL4/MIWI2 nuclear localization and association with secondary piRNAs antisense. Besides their function in transposable elements repression, piRNAs are probably involved in other processes during meiosis such as translation regulation. Indirectly modulates expression of genes such as PDGFRB, SLC2A1, ITGA6, GJA7, THY1, CD9 and STRA8. Represses circadian rhythms by promoting the stability and activity of core clock components BMAL1 and CLOCK by inhibiting GSK3B-mediated phosphorylation and ubiquitination-dependent degradation of these proteins. The sequence is that of Piwi-like protein 2 from Mus musculus (Mouse).